Consider the following 402-residue polypeptide: DNA polymerase IV (402 aa).

Residues 5–187 (ILLADMNSFY…LPVRELFGVG (183 aa)) enclose the UmuC domain. Mg(2+) contacts are provided by D9 and D105. E106 is a catalytic residue.

Belongs to the DNA polymerase type-Y family. Monomer. It depends on Mg(2+) as a cofactor.

Its subcellular location is the cytoplasm. The catalysed reaction is DNA(n) + a 2'-deoxyribonucleoside 5'-triphosphate = DNA(n+1) + diphosphate. Its function is as follows. Poorly processive, error-prone DNA polymerase involved in untargeted mutagenesis. Copies undamaged DNA at stalled replication forks, which arise in vivo from mismatched or misaligned primer ends. These misaligned primers can be extended by PolIV. Exhibits no 3'-5' exonuclease (proofreading) activity. May be involved in translesional synthesis, in conjunction with the beta clamp from PolIII. This is DNA polymerase IV from Pelotomaculum thermopropionicum (strain DSM 13744 / JCM 10971 / SI).